Consider the following 328-residue polypeptide: Protein MGF 300-4L (328 aa).

Belongs to the asfivirus MGF 300 family.

In Ornithodoros (relapsing fever ticks), this protein is Protein MGF 300-4L.